The chain runs to 161 residues: Myosin regulatory light chain (161 aa).

2 positions are modified to phosphoserine: serine 13 and serine 14. 3 EF-hand domains span residues 20–55, 56–91, and 93–128; these read EQVAELKEAFELFDKDRTGFIKKDALKTTCKQFGVF, VMEDQLDAMFAEADTTKSGAIGFPEFMSMMSRRMKQ, and SNEQILMNAFKTFDPEGNGYILTKDLSKALTTLGDK.

In terms of assembly, myosin is a hexamer of 2 heavy chains and 4 light chains (two regulatory light chains and two essential light chains).

The sequence is that of Myosin regulatory light chain (mlcR) from Dictyostelium discoideum (Social amoeba).